The primary structure comprises 183 residues: MQHNKIKVAFLDRDGVINKEVNYLHKIEDFEYTSKCIVGLKKIRDLGYEIIIITNQAGIARGYYSEKQYQLLTDWYRNDLKEKGVDILDIFHCPHYPDGIVPELSKDCYCRKPSPGMIEQARKKYSIDIKSSILVGDKNSDIHAGERAGIPRCFLVKTGHPTSEPTENAILSNNLFTISKLIE.

Residues cysteine 93, histidine 95, cysteine 108, and cysteine 110 each coordinate Zn(2+).

Belongs to the GmhB family.

It localises to the cytoplasm. The enzyme catalyses D-glycero-alpha-D-manno-heptose 1,7-bisphosphate + H2O = D-glycero-alpha-D-manno-heptose 1-phosphate + phosphate. Its pathway is nucleotide-sugar biosynthesis; GDP-D-glycero-alpha-D-manno-heptose biosynthesis; GDP-D-glycero-alpha-D-manno-heptose from D-glycero-alpha-D-manno-heptose 7-phosphate: step 2/3. In terms of biological role, converts the D-glycero-alpha-D-manno-heptose 1,7-bisphosphate intermediate into D-glycero-alpha-D-manno-heptose 1-phosphate by removing the phosphate group at the C-7 position. This chain is D-glycero-alpha-D-manno-heptose-1,7-bisphosphate 7-phosphatase (gmhB2), found in Photorhabdus laumondii subsp. laumondii (strain DSM 15139 / CIP 105565 / TT01) (Photorhabdus luminescens subsp. laumondii).